We begin with the raw amino-acid sequence, 256 residues long: Hemin import ATP-binding protein HmuV (256 aa).

An ABC transporter domain is found at 2–238 (ISAQNLVYSL…QELTMLYGAD (237 aa)). 34 to 41 (GPNGAGKS) lines the ATP pocket.

This sequence belongs to the ABC transporter superfamily. Heme (hemin) importer (TC 3.A.1.14.5) family. The complex is composed of two ATP-binding proteins (HmuV), two transmembrane proteins (HmuU) and a solute-binding protein (HmuT).

Its subcellular location is the cell inner membrane. Its function is as follows. Part of the ABC transporter complex HmuTUV involved in hemin import. Responsible for energy coupling to the transport system. This chain is Hemin import ATP-binding protein HmuV, found in Shigella dysenteriae.